We begin with the raw amino-acid sequence, 98 residues long: NADH-ubiquinone oxidoreductase chain 4L (98 aa).

Transmembrane regions (helical) follow at residues M1–M21, S29–L49, and I61–V81.

It belongs to the complex I subunit 4L family. In terms of assembly, core subunit of respiratory chain NADH dehydrogenase (Complex I) which is composed of 45 different subunits.

It localises to the mitochondrion inner membrane. It catalyses the reaction a ubiquinone + NADH + 5 H(+)(in) = a ubiquinol + NAD(+) + 4 H(+)(out). In terms of biological role, core subunit of the mitochondrial membrane respiratory chain NADH dehydrogenase (Complex I) which catalyzes electron transfer from NADH through the respiratory chain, using ubiquinone as an electron acceptor. Part of the enzyme membrane arm which is embedded in the lipid bilayer and involved in proton translocation. This Acinonyx jubatus (Cheetah) protein is NADH-ubiquinone oxidoreductase chain 4L (MT-ND4L).